Reading from the N-terminus, the 255-residue chain is tRNA (guanine-N(1)-)-methyltransferase (255 aa).

Residues G113 and 133–138 contribute to the S-adenosyl-L-methionine site; that span reads IGDYVL.

Belongs to the RNA methyltransferase TrmD family. Homodimer.

It localises to the cytoplasm. It catalyses the reaction guanosine(37) in tRNA + S-adenosyl-L-methionine = N(1)-methylguanosine(37) in tRNA + S-adenosyl-L-homocysteine + H(+). Specifically methylates guanosine-37 in various tRNAs. The chain is tRNA (guanine-N(1)-)-methyltransferase from Escherichia fergusonii (strain ATCC 35469 / DSM 13698 / CCUG 18766 / IAM 14443 / JCM 21226 / LMG 7866 / NBRC 102419 / NCTC 12128 / CDC 0568-73).